Consider the following 427-residue polypeptide: MHECLTLNPISLVNGTINLPGSKSITNRALLLSAMSNSTTHLKNILYSQDTQYMLNTLKICGIKFNCSYTNLSCTIEGCNKPLNISHKTSLFLGNAGTAFRSLAAIFSLNNNNILLTGNKRMKQRPIKHLVQALQQGGAQITYSEQDQYPPIKIKGGFIGGNIFVSGKISSQFLSALLIATPLAQLDSTITVTEKLVSKPYIDITLNLISKFGIKIIHKDYTKFNVQGRQKYISPKEYSIEGDASSASYFLAAAAIKGGSVKVTGIGLNSIQGDVKFANVLKKMGAYITFGKDFIVCKKKDLIGIDLDMNDIPDAAMTIAIVALFSKGKTVIRNIYNWRVKETDRLSAMTNELKKIGAQVIEGNDYIEILPPINFVYAKINTYDDHRIAMCFALIALSGIKVTLLNYKCVNKTFPDYFQKLKSICSY.

Residues Lys23, Ser24, and Arg28 each coordinate 3-phosphoshikimate. Lys23 contacts phosphoenolpyruvate. Gly97 and Arg125 together coordinate phosphoenolpyruvate. 3-phosphoshikimate is bound by residues Ser170, Ser171, Gln172, Ser198, Asp314, Asn337, and Lys341. Gln172 is a phosphoenolpyruvate binding site. Asp314 acts as the Proton acceptor in catalysis. Residues Arg345, Arg387, and Lys412 each contribute to the phosphoenolpyruvate site.

Belongs to the EPSP synthase family. In terms of assembly, monomer.

It is found in the cytoplasm. It catalyses the reaction 3-phosphoshikimate + phosphoenolpyruvate = 5-O-(1-carboxyvinyl)-3-phosphoshikimate + phosphate. The protein operates within metabolic intermediate biosynthesis; chorismate biosynthesis; chorismate from D-erythrose 4-phosphate and phosphoenolpyruvate: step 6/7. In terms of biological role, catalyzes the transfer of the enolpyruvyl moiety of phosphoenolpyruvate (PEP) to the 5-hydroxyl of shikimate-3-phosphate (S3P) to produce enolpyruvyl shikimate-3-phosphate and inorganic phosphate. The chain is 3-phosphoshikimate 1-carboxyvinyltransferase from Buchnera aphidicola subsp. Baizongia pistaciae (strain Bp).